Reading from the N-terminus, the 1130-residue chain is Sodium/potassium/calcium exchanger 1 (1130 aa).

Residues 1–419 (MGKLIRMGTQ…DLFSVEDRRQ (419 aa)) are Extracellular-facing. Positions 104–209 (PSIAMEDTPN…SPTATVRDRE (106 aa)) are disordered. Over residues 125-136 (LKNSYSPTTAGT) the composition is skewed to polar residues. A compositionally biased stretch (basic and acidic residues) spans 170–187 (PRGERKNSSPTHAREKGR). N-linked (GlcNAc...) asparagine glycans are attached at residues Asn-176 and Asn-273. The tract at residues 274–295 (ISTTPQGAVPQHTPATSEEQMT) is disordered. Residues 286 to 295 (TPATSEEQMT) show a composition bias toward polar residues. Residues 420-440 (GWVVLHIFGMMYVFVALAIVC) traverse the membrane as a helical segment. Residues 441–464 (DEYFVPALGVITHKLQISEDVAGA) lie on the Cytoplasmic side of the membrane. One copy of the Alpha-1 repeat lies at 461-501 (VAGATFMAAGGSAPELFTSLIGVFISHSNVGIGTIVGSAVF). A helical membrane pass occupies residues 465–485 (TFMAAGGSAPELFTSLIGVFI). Residues 486-489 (SHSN) are Extracellular-facing. Residues 490-510 (VGIGTIVGSAVFNILFVIGTC) form a helical membrane-spanning segment. The Cytoplasmic segment spans residues 511–530 (ALFSREILNLTWWPLFRDVS). A helical membrane pass occupies residues 531 to 551 (FYILDLSMLIVFFLDSFIAWW). Glu-552 is a topological domain (extracellular). The chain crosses the membrane as a helical span at residues 553-573 (SLLLLLAYALYVFTMKWNKQI). Topologically, residues 574–938 (ELWVKEQLSR…SLEWPDSRQK (365 aa)) are cytoplasmic. The tract at residues 598–619 (PSEDAVEENEQQDSKKLKLPSV) is disordered. Residue Ser-625 is modified to Phosphoserine. Residues 650–932 (GEARPSKDKQ…ENEEPLSLEW (283 aa)) form a disordered region. A compositionally biased stretch (polar residues) spans 661–675 (SLNQEARVLSQTKAE). The residue at position 690 (Thr-690) is a Phosphothreonine. The span at 703-715 (QEDDPGCQEDVDE) shows a compositional bias: acidic residues. Basic and acidic residues predominate over residues 730-751 (ETETEGKKDEQEGETEAERKED). Acidic residues-rich tracts occupy residues 766–782 (GETE…GETE) and 802–820 (QEGE…GETE). Residues 833-855 (AESKEVEQERETEAEGKDKHEGQ) are compositionally biased toward basic and acidic residues. Composition is skewed to acidic residues over residues 870–880 (GETEANAEDQC) and 896–928 (DGGD…EEPL). The helical transmembrane segment at 939–959 (QAIYLFLLPIVFPLWLTIPDV) threads the bilayer. Topologically, residues 960-966 (RRQESRK) are extracellular. A helical transmembrane segment spans residues 967-987 (FFVITFLGSIIWIAMFSYLMV). Over 988–1002 (WWAHQVGETIGISEE) the chain is Cytoplasmic. The helical transmembrane segment at 1003–1023 (IMGLTILAAGTSIPDLITSVI) threads the bilayer. Residues 1010–1041 (AAGTSIPDLITSVIVARKGLGDMAVSSSVGSN) form an Alpha-2 repeat. Residues 1024–1041 (VARKGLGDMAVSSSVGSN) lie on the Extracellular side of the membrane. Residues 1042–1062 (IFDITVGLPVPWLLFSLINAL) traverse the membrane as a helical segment. The Cytoplasmic portion of the chain corresponds to 1063-1070 (QPVPVSSN). Residues 1071–1091 (GLFCAIVLLFLMLLFVIFSIA) form a helical membrane-spanning segment. The Extracellular segment spans residues 1092 to 1099 (SCKWRMNK). Residues 1100–1120 (ILGFTMFLLYFVFLVISVMLE) form a helical membrane-spanning segment. The Cytoplasmic portion of the chain corresponds to 1121 to 1130 (DRIISCPVSV).

Belongs to the Ca(2+):cation antiporter (CaCA) (TC 2.A.19) family. SLC24A subfamily. Post-translationally, the uncleaved signal sequence is required for efficient membrane targeting and proper membrane integration and topology.

It is found in the cell membrane. It carries out the reaction Ca(2+)(out) + K(+)(out) + 4 Na(+)(in) = Ca(2+)(in) + K(+)(in) + 4 Na(+)(out). Calcium, potassium:sodium antiporter that transports 1 Ca(2+) and 1 K(+) in exchange for 4 Na(+). Critical component of the visual transduction cascade, controlling the calcium concentration of outer segments during light and darkness. Light causes a rapid lowering of cytosolic free calcium in the outer segment of both retinal rod and cone photoreceptors and the light-induced lowering of calcium is caused by extrusion via this protein which plays a key role in the process of light adaptation. This chain is Sodium/potassium/calcium exchanger 1, found in Mus musculus (Mouse).